The sequence spans 209 residues: Uracil phosphoribosyltransferase (209 aa).

5-phospho-alpha-D-ribose 1-diphosphate is bound by residues R79, R104, and 131–139 (DPMLATGGS). Residues I194 and 199–201 (GDA) each bind uracil. D200 lines the 5-phospho-alpha-D-ribose 1-diphosphate pocket.

It belongs to the UPRTase family. Mg(2+) serves as cofactor.

The enzyme catalyses UMP + diphosphate = 5-phospho-alpha-D-ribose 1-diphosphate + uracil. It participates in pyrimidine metabolism; UMP biosynthesis via salvage pathway; UMP from uracil: step 1/1. Its activity is regulated as follows. Allosterically activated by GTP. Functionally, catalyzes the conversion of uracil and 5-phospho-alpha-D-ribose 1-diphosphate (PRPP) to UMP and diphosphate. The sequence is that of Uracil phosphoribosyltransferase from Listeria monocytogenes serovar 1/2a (strain ATCC BAA-679 / EGD-e).